The chain runs to 212 residues: UDP-N-acetylglucosamine transferase subunit ALG13 (212 aa).

It belongs to the glycosyltransferase 28 family. Heterodimer with ALG14 to form a functional enzyme.

The protein localises to the endoplasmic reticulum. The enzyme catalyses an N-acetyl-alpha-D-glucosaminyl-diphospho-di-trans,poly-cis-dolichol + UDP-N-acetyl-alpha-D-glucosamine = an N,N'-diacetylchitobiosyl-diphospho-di-trans,poly-cis-dolichol + UDP + H(+). In terms of biological role, involved in protein N-glycosylation. Essential for the second step of the dolichol-linked oligosaccharide pathway. This Debaryomyces hansenii (strain ATCC 36239 / CBS 767 / BCRC 21394 / JCM 1990 / NBRC 0083 / IGC 2968) (Yeast) protein is UDP-N-acetylglucosamine transferase subunit ALG13 (ALG13).